A 323-amino-acid chain; its full sequence is Leucine-rich repeat-containing protein 46 (323 aa).

LRR repeat units follow at residues 49-70 (ELET…EKLR), 71-92 (NIHS…ACIT), 93-114 (SLRF…LDLQ), and 115-135 (YLQF…DELP). Positions 146–188 (NPCTNQEGYRKMVIGALPLLLDLDKQPILERWTSDEEDKSSDD) constitute an LRRCT domain. Thr178 bears the Phosphothreonine mark. Phosphoserine occurs at positions 179, 185, and 186. Residues 203 to 228 (RGFFKDLEQELHQHQERRQQAALTEH) adopt a coiled-coil conformation. Residues 249-323 (MAGDCSSTAT…TKMTNKKSTK (75 aa)) are disordered. Over residues 267 to 316 (PKATSSTQTASTTKKQVSKNQKSSVQARKGALAATTSKTSQAATPSMTKM) the composition is skewed to low complexity. Position 303 is a phosphoserine (Ser303).

Testis-specific (at protein level).

The protein resides in the cell projection. It is found in the cilium. It localises to the flagellum. Its function is as follows. Required for normal spermatogenesis and male fertility. Plays an important role in sperm flagellum biogenesis. The chain is Leucine-rich repeat-containing protein 46 (Lrrc46) from Mus musculus (Mouse).